A 213-amino-acid chain; its full sequence is Dimethylamine corrinoid protein (213 aa).

Residues 1-90 (MSKEELLQEL…LMPEGASGSK (90 aa)) form the B12-binding N-terminal domain. The 123-residue stretch at 91–213 (LGVIVNGTVE…AVAKAKELLA (123 aa)) folds into the B12-binding domain. Residue H104 coordinates methylcob(III)alamin.

The protein belongs to the methylamine corrinoid protein family. In terms of assembly, copurifies with MtbA.

It participates in one-carbon metabolism; methanogenesis from dimethylamine. Its function is as follows. Acts as a methyl group carrier between MtbB1 and MtbA. Binds 1 corrinoid cofactor per protein, is subsequently demethylated by MtbA. The polypeptide is Dimethylamine corrinoid protein (Methanosarcina barkeri).